Reading from the N-terminus, the 158-residue chain is Siroheme decarboxylase beta subunit (158 aa).

This sequence belongs to the Ahb/Nir family. Forms a heterodimer composed of AhbA and AhbB.

The enzyme catalyses siroheme + 2 H(+) = 12,18-didecarboxysiroheme + 2 CO2. It functions in the pathway porphyrin-containing compound metabolism; protoheme biosynthesis. In terms of biological role, involved in siroheme-dependent heme b biosynthesis. Catalyzes the decarboxylation of siroheme into didecarboxysiroheme. This chain is Siroheme decarboxylase beta subunit, found in Oleidesulfovibrio alaskensis (strain ATCC BAA-1058 / DSM 17464 / G20) (Desulfovibrio alaskensis).